We begin with the raw amino-acid sequence, 1108 residues long: Serine/threonine-protein kinase AKL1 (1108 aa).

Ser-2 is modified (N-acetylserine). The residue at position 10 (Ser-10) is a Phosphoserine. The Protein kinase domain maps to 35 to 319 (VEVVNYLAEG…IYQVLYHLCE (285 aa)). Residues 41 to 49 (LAEGGFAQI) and Lys-70 each bind ATP. The Proton acceptor role is filled by Asp-181. Residues 405-466 (IPSQNVGQEL…QSPGIEDKSI (62 aa)) are disordered. Ser-407 carries the post-translational modification Phosphoserine. The span at 419-435 (ESQSDQRKSTLSEDKSS) shows a compositional bias: basic and acidic residues. Positions 436-449 (RTTSNANSSGTANN) are enriched in low complexity. Thr-471 bears the Phosphothreonine mark. Polar residues predominate over residues 493–513 (KQSSDPTISEQSPRLNTQSLP). The tract at residues 493–534 (KQSSDPTISEQSPRLNTQSLPQRQKSTSSYSSGGRSMKSTSY) is disordered. At Ser-504 the chain carries Phosphoserine. Residues 514–534 (QRQKSTSSYSSGGRSMKSTSY) are compositionally biased toward low complexity. 2 positions are modified to phosphoserine: Ser-541 and Ser-574. Over residues 590-629 (QQQGQRYQQAQNQTGTQGNTFPDESQYQSRVEQQQQQQDQ) the composition is skewed to low complexity. Disordered stretches follow at residues 590–663 (QQQG…GDSG) and 765–791 (EDMR…HSSS). The segment covering 781–791 (NSANEPMHSSS) has biased composition (polar residues). The residue at position 801 (Ser-801) is a Phosphoserine. Residues 807 to 838 (AGKQSFQDTNEPQTGGIEDAGGSGTIKGSNNN) are disordered. Polar residues predominate over residues 810–819 (QSFQDTNEPQ). Ser-846 is modified (phosphoserine). Residues 858–1108 (GAAVSSFSSS…SFFSVFRSEK (251 aa)) are disordered. The span at 859-872 (AAVSSFSSSSSSAS) shows a compositional bias: low complexity. Basic and acidic residues predominate over residues 910–934 (DDARRGKTAERRPLHNERGHKDQAR). A compositionally biased stretch (polar residues) spans 935 to 976 (SSDASKSNQFKSKDFSSVSTRQPRQSLDLNFQEVNLSSPTLT). 2 positions are modified to phosphoserine: Ser-953 and Ser-960. Residues 1006–1048 (ENKRHSTGHELSTRSNGKHETHRTGSKQRHDLERYRHSKDKDS) are compositionally biased toward basic and acidic residues. Residues Lys-1008 and Lys-1046 each participate in a glycyl lysine isopeptide (Lys-Gly) (interchain with G-Cter in ubiquitin) cross-link. Ser-1048 is subject to Phosphoserine. The span at 1049–1060 (NSSITISTSTPS) shows a compositional bias: low complexity. A compositionally biased stretch (basic and acidic residues) spans 1071–1082 (QSLDLERVRREA). Position 1072 is a phosphoserine (Ser-1072).

The protein belongs to the protein kinase superfamily. Ser/Thr protein kinase family.

It catalyses the reaction L-seryl-[protein] + ATP = O-phospho-L-seryl-[protein] + ADP + H(+). The enzyme catalyses L-threonyl-[protein] + ATP = O-phospho-L-threonyl-[protein] + ADP + H(+). Functionally, phosphorylates SCD5. The sequence is that of Serine/threonine-protein kinase AKL1 (AKL1) from Saccharomyces cerevisiae (strain ATCC 204508 / S288c) (Baker's yeast).